Here is a 264-residue protein sequence, read N- to C-terminus: Major prion protein (264 aa).

A signal peptide spans 1–24 (MVKSHIGSWILVLFVAMWSDVGLC). Positions 25 to 241 (KKRPKPGGGW…ESEAYYQRGA (217 aa)) are interaction with GRB2, ERI3 and SYN1. The disordered stretch occupies residues 28-118 (PKPGGGWNTG…QWNKPSKPKT (91 aa)). Repeat copies occupy residues 54 to 62 (SQGGGGWGQ), 63 to 70 (PHGGGWGQ), 71 to 78 (PHGGGWGQ), 79 to 86 (PHGGGWGQ), 87 to 94 (PHGGGWGQ), and 95 to 103 (PHGGGGWGQ). Positions 54–103 (SQGGGGWGQPHGGGWGQPHGGGWGQPHGGGWGQPHGGGWGQPHGGGGWGQ) are 6 X 8 AA tandem repeats of P-H-G-G-G-W-G-Q. The segment covering 55–107 (QGGGGWGQPHGGGWGQPHGGGWGQPHGGGWGQPHGGGWGQPHGGGGWGQGGTH) has biased composition (gly residues). H72, G73, G74, H80, G81, G82, H88, G89, G90, H96, G98, and G99 together coordinate Cu(2+). C190 and C225 are joined by a disulfide. N-linked (GlcNAc...) asparagine glycans are attached at residues N192 and N208. A241 carries the GPI-anchor amidated alanine lipid modification. The propeptide at 242–264 (SVILFSSPPVILLISFLIFLIVG) is removed in mature form.

Belongs to the prion family. Monomer and homodimer. Has a tendency to aggregate into amyloid fibrils containing a cross-beta spine, formed by a steric zipper of superposed beta-strands. Soluble oligomers may represent an intermediate stage on the path to fibril formation. Copper binding may promote oligomerization. Interacts with GRB2, APP, ERI3/PRNPIP and SYN1. Mislocalized cytosolically exposed PrP interacts with MGRN1; this interaction alters MGRN1 subcellular location and causes lysosomal enlargement. Interacts with KIAA1191.

The protein resides in the cell membrane. The protein localises to the golgi apparatus. Its function is as follows. Its primary physiological function is unclear. Has cytoprotective activity against internal or environmental stresses. May play a role in neuronal development and synaptic plasticity. May be required for neuronal myelin sheath maintenance. May play a role in iron uptake and iron homeostasis. Soluble oligomers are toxic to cultured neuroblastoma cells and induce apoptosis (in vitro). Association with GPC1 (via its heparan sulfate chains) targets PRNP to lipid rafts. Also provides Cu(2+) or Zn(2+) for the ascorbate-mediated GPC1 deaminase degradation of its heparan sulfate side chains. This Tragelaphus imberbis (Lesser kudu) protein is Major prion protein (PRNP).